We begin with the raw amino-acid sequence, 76 residues long: FMRFamide-related neuropeptides (76 aa).

The first 27 residues, 1–27 (MCVQTRMLVAVAVVLVVLAVLSDPVSA), serve as a signal peptide directing secretion. A Phenylalanine amide modification is found at F39.

This sequence belongs to the FARP (FMRFamide related peptide) family. As to expression, olfactory lobe and accessory lobe, olfactory globular tract, olfactory lobe cells (at protein level). Widely distributed throughout nervous system.

It localises to the secreted. In terms of biological role, GYRKPPFNGSIF-amide may be involved in olfaction and contraction of hindgut. The protein is FMRFamide-related neuropeptides of Procambarus clarkii (Red swamp crayfish).